The primary structure comprises 359 residues: Photosystem II protein D1 1 (359 aa).

Transmembrane regions (helical) follow at residues 29-46, 118-133, and 142-156; these read YVGWFGVLMIPTLLAATI, HFLIGIYAYMGREWEL, and WICVAYSAPVAAASA. H118 serves as a coordination point for chlorophyll a. Position 126 (Y126) interacts with pheophytin a. Positions 170 and 189 each coordinate [CaMn4O5] cluster. The helical transmembrane segment at 197–218 threads the bilayer; that stretch reads FHMLGVAGVFGGSLFSAMHGSL. H198 lines the chlorophyll a pocket. A quinone is bound by residues H215 and 264 to 265; that span reads SF. H215 contacts Fe cation. H272 provides a ligand contact to Fe cation. Residues 274–288 traverse the membrane as a helical segment; the sequence is FLAAWPVVGIWFTAL. Positions 332, 333, 342, and 344 each coordinate [CaMn4O5] cluster. Residues 345 to 359 constitute a propeptide that is removed on maturation; it reads AAESTPVALQAPAIG.

It belongs to the reaction center PufL/M/PsbA/D family. PSII is composed of 1 copy each of membrane proteins PsbA, PsbB, PsbC, PsbD, PsbE, PsbF, PsbH, PsbI, PsbJ, PsbK, PsbL, PsbM, PsbT, PsbX, PsbY, PsbZ, Psb30/Ycf12, peripheral proteins PsbO, CyanoQ (PsbQ), PsbU, PsbV and a large number of cofactors. It forms dimeric complexes. The D1/D2 heterodimer binds P680, chlorophylls that are the primary electron donor of PSII, and subsequent electron acceptors. It shares a non-heme iron and each subunit binds pheophytin, quinone, additional chlorophylls, carotenoids and lipids. D1 provides most of the ligands for the Mn4-Ca-O5 cluster of the oxygen-evolving complex (OEC). There is also a Cl(-1) ion associated with D1 and D2, which is required for oxygen evolution. The PSII complex binds additional chlorophylls, carotenoids and specific lipids. serves as cofactor. In terms of processing, tyr-161 forms a radical intermediate that is referred to as redox-active TyrZ, YZ or Y-Z. Post-translationally, C-terminally processed by CtpA; processing is essential to allow assembly of the oxygen-evolving complex and thus photosynthetic growth.

The protein localises to the cellular thylakoid membrane. The enzyme catalyses 2 a plastoquinone + 4 hnu + 2 H2O = 2 a plastoquinol + O2. Photosystem II (PSII) is a light-driven water:plastoquinone oxidoreductase that uses light energy to abstract electrons from H(2)O, generating O(2) and a proton gradient subsequently used for ATP formation. It consists of a core antenna complex that captures photons, and an electron transfer chain that converts photonic excitation into a charge separation. The D1/D2 (PsbA/PsbD) reaction center heterodimer binds P680, the primary electron donor of PSII as well as several subsequent electron acceptors. The sequence is that of Photosystem II protein D1 1 from Parasynechococcus marenigrum (strain WH8102).